A 596-amino-acid chain; its full sequence is Elongation factor 4 (596 aa).

The region spanning K2–V184 is the tr-type G domain. Residues D14–T19 and N131–D134 each bind GTP.

It belongs to the TRAFAC class translation factor GTPase superfamily. Classic translation factor GTPase family. LepA subfamily.

The protein localises to the cell inner membrane. The catalysed reaction is GTP + H2O = GDP + phosphate + H(+). Functionally, required for accurate and efficient protein synthesis under certain stress conditions. May act as a fidelity factor of the translation reaction, by catalyzing a one-codon backward translocation of tRNAs on improperly translocated ribosomes. Back-translocation proceeds from a post-translocation (POST) complex to a pre-translocation (PRE) complex, thus giving elongation factor G a second chance to translocate the tRNAs correctly. Binds to ribosomes in a GTP-dependent manner. This chain is Elongation factor 4, found in Shewanella frigidimarina (strain NCIMB 400).